Consider the following 589-residue polypeptide: Coiled-coil domain-containing protein 22 homolog (589 aa).

2 coiled-coil regions span residues 287 to 426 (KTPL…LQTK) and 523 to 589 (CEEL…TSRQ). The segment at 568 to 589 (EMQNESQRLEESIRRMEVTSRQ) is disordered. A compositionally biased stretch (basic and acidic residues) spans 574-589 (QRLEESIRRMEVTSRQ).

The protein belongs to the CCDC22 family.

The protein is Coiled-coil domain-containing protein 22 homolog of Aedes aegypti (Yellowfever mosquito).